Reading from the N-terminus, the 782-residue chain is Potassium transporter 6 (782 aa).

Residues 1-18 (MEIESGSYQNAKKESWRT) lie on the Cytoplasmic side of the membrane. A helical transmembrane segment spans residues 19–39 (VLTLAYQSLGVVYGDLSISPL). At 40 to 61 (YVYKSTFAEDIHHSESNEEIFG) the chain is on the extracellular side. A helical transmembrane segment spans residues 62–82 (VLSFIFWTITLVPLLKYVFIV). At 83–153 (LRADDNGEGG…TLEKHGVLQK (71 aa)) the chain is on the cytoplasmic side. A helical membrane pass occupies residues 154–174 (ILLVLALIGTCMVIGDGVLTP). The Extracellular segment spans residues 175–195 (AISVFSAVSGVELSMSKEHHK). The chain crosses the membrane as a helical span at residues 196–216 (YIELPAACVILIGLFALQHYG). Topologically, residues 217 to 219 (THR) are cytoplasmic. The helical transmembrane segment at 220 to 240 (VGFLFAPVILLWLMCISAIGV) threads the bilayer. The Extracellular segment spans residues 241–270 (YNIFHWNPHVYQALSPYYMYKFLKKTQSRG). A helical transmembrane segment spans residues 271–291 (WMSLGGILLCITGSEAMFADL). At 292–296 (GHFSQ) the chain is on the cytoplasmic side. Residues 297–317 (LSIKIAFTSLVYPSLILAYMG) form a helical membrane-spanning segment. The Extracellular segment spans residues 318 to 347 (QAAYLSQHHIIESEYNIGFYVSVPERLRWP). A helical membrane pass occupies residues 348–368 (VLVIAILAAVVGSQAIITGTF). Residues 369–395 (SIIKQCSALGCFPKVKIVHTSSKIHGQ) are Cytoplasmic-facing. Residues 396-416 (IYIPEINWILMVLCLAVTIGF) traverse the membrane as a helical segment. Over 417–421 (RDTKR) the chain is Extracellular. Transmembrane regions (helical) follow at residues 422-442 (LGNASGLAVITVMLVTTCLMS) and 443-463 (LVIVLCWHKSVIFAIVFVVFF). The Extracellular portion of the chain corresponds to 464 to 474 (GTIESLYFSAS). A helical membrane pass occupies residues 475-495 (LIKFLEGAWVPIALAFCFLLA). At 496–782 (MCTWHYGTLK…TLEVGMIYNV (287 aa)) the chain is on the cytoplasmic side. A compositionally biased stretch (basic and acidic residues) spans 664–675 (YESDIDDPDKPG). The interval 664 to 693 (YESDIDDPDKPGTSEIRSPKPKKKSKSKVK) is disordered. Residues 682 to 693 (PKPKKKSKSKVK) show a composition bias toward basic residues.

Belongs to the HAK/KUP transporter (TC 2.A.72.3) family.

The protein resides in the cell membrane. In terms of biological role, probable potassium transporter. In Arabidopsis thaliana (Mouse-ear cress), this protein is Potassium transporter 6 (POT6).